The following is a 540-amino-acid chain: Putative cysteine ligase BshC (540 aa).

Residues 455–491 adopt a coiled-coil conformation; it reads GKENLKRLIRVVNSFEEKVKQRHRKNNQVAIQQLQKI.

It belongs to the BshC family.

Involved in bacillithiol (BSH) biosynthesis. May catalyze the last step of the pathway, the addition of cysteine to glucosamine malate (GlcN-Mal) to generate BSH. This Desulforamulus reducens (strain ATCC BAA-1160 / DSM 100696 / MI-1) (Desulfotomaculum reducens) protein is Putative cysteine ligase BshC.